The sequence spans 246 residues: Orotidine 5'-phosphate decarboxylase (246 aa).

Residues Asp18, Lys39, 66 to 75 (DLKFHDIPAT), Thr130, Arg192, Gln201, Gly221, and Arg222 contribute to the substrate site. The active-site Proton donor is the Lys68.

It belongs to the OMP decarboxylase family. Type 1 subfamily. In terms of assembly, homodimer.

It catalyses the reaction orotidine 5'-phosphate + H(+) = UMP + CO2. It participates in pyrimidine metabolism; UMP biosynthesis via de novo pathway; UMP from orotate: step 2/2. In terms of biological role, catalyzes the decarboxylation of orotidine 5'-monophosphate (OMP) to uridine 5'-monophosphate (UMP). The sequence is that of Orotidine 5'-phosphate decarboxylase from Parasynechococcus marenigrum (strain WH8102).